The primary structure comprises 347 residues: Heat-inducible transcription repressor HrcA (347 aa).

This sequence belongs to the HrcA family.

Functionally, negative regulator of class I heat shock genes (grpE-dnaK-dnaJ and groELS operons). Prevents heat-shock induction of these operons. This Sorangium cellulosum (strain So ce56) (Polyangium cellulosum (strain So ce56)) protein is Heat-inducible transcription repressor HrcA.